The sequence spans 73 residues: Translation initiation factor IF-1 (73 aa).

In terms of domain architecture, S1-like spans 1-73 (MPKKDGAIEI…TRGRIVYRYK (73 aa)).

It belongs to the IF-1 family. In terms of assembly, component of the 30S ribosomal translation pre-initiation complex which assembles on the 30S ribosome in the order IF-2 and IF-3, IF-1 and N-formylmethionyl-tRNA(fMet); mRNA recruitment can occur at any time during PIC assembly.

It localises to the cytoplasm. In terms of biological role, one of the essential components for the initiation of protein synthesis. Stabilizes the binding of IF-2 and IF-3 on the 30S subunit to which N-formylmethionyl-tRNA(fMet) subsequently binds. Helps modulate mRNA selection, yielding the 30S pre-initiation complex (PIC). Upon addition of the 50S ribosomal subunit IF-1, IF-2 and IF-3 are released leaving the mature 70S translation initiation complex. This is Translation initiation factor IF-1 from Salinispora arenicola (strain CNS-205).